The sequence spans 122 residues: Large ribosomal subunit protein uL14 (122 aa).

This sequence belongs to the universal ribosomal protein uL14 family. As to quaternary structure, part of the 50S ribosomal subunit. Forms a cluster with proteins L3 and L19. In the 70S ribosome, L14 and L19 interact and together make contacts with the 16S rRNA in bridges B5 and B8.

Binds to 23S rRNA. Forms part of two intersubunit bridges in the 70S ribosome. This chain is Large ribosomal subunit protein uL14, found in Psychrobacter arcticus (strain DSM 17307 / VKM B-2377 / 273-4).